A 232-amino-acid polypeptide reads, in one-letter code: 2,3,4,5-tetrahydropyridine-2,6-dicarboxylate N-acetyltransferase (232 aa).

It belongs to the transferase hexapeptide repeat family. DapH subfamily.

It catalyses the reaction (S)-2,3,4,5-tetrahydrodipicolinate + acetyl-CoA + H2O = L-2-acetamido-6-oxoheptanedioate + CoA. It participates in amino-acid biosynthesis; L-lysine biosynthesis via DAP pathway; LL-2,6-diaminopimelate from (S)-tetrahydrodipicolinate (acetylase route): step 1/3. Catalyzes the transfer of an acetyl group from acetyl-CoA to tetrahydrodipicolinate. The sequence is that of 2,3,4,5-tetrahydropyridine-2,6-dicarboxylate N-acetyltransferase from Streptococcus pneumoniae serotype 4 (strain ATCC BAA-334 / TIGR4).